The primary structure comprises 134 residues: MTEEPTKENLGGPKSPTPVTMEKSPKSEVVVTTVPLVSEVQLTAATGGAELSCYRCIIPFAVVVFITGIVVTAVAYSFNSHGSVISILGLVLLSSGLFLLASSALCWKVRQRNKKVKRRESQTALVVNQRSLFA.

The tract at residues 1–24 is disordered; the sequence is MTEEPTKENLGGPKSPTPVTMEKS. Phosphoserine is present on Ser15. 2 helical membrane-spanning segments follow: residues 56–76 and 84–104; these read CIIP…AVAY and VISI…ASSA. The residue at position 121 (Ser121) is a Phosphoserine.

As to quaternary structure, interacts (via C-terminus) with TRPA1 and TRPV1. Interacts with TASOR.

The protein localises to the cell membrane. The protein resides in the membrane. It is found in the perikaryon. It localises to the cytoplasm. Its subcellular location is the perinuclear region. The protein localises to the endoplasmic reticulum. Plays a role during embryonic arterial endothelium differentiation and vascular morphogenesis through the ACVRL1 receptor-dependent signaling pathway upon stimulation by bone morphogenetic proteins, such as GDF2/BMP9 and BMP10. Involved in the regulation of nociception, acting as a modulator of the interaction between TRPA1 and TRPV1, two molecular sensors and mediators of pain signals in dorsal root ganglia (DRG) neurons. Mechanistically, it weakens their interaction, thereby releasing the inhibition of TRPA1 by TRPV1 and increasing the single-channel open probability of the TRPA1-TRPV1 complex. In Rattus norvegicus (Rat), this protein is Transmembrane protein 100 (Tmem100).